We begin with the raw amino-acid sequence, 373 residues long: MKIEKIEVNSLQEAIEIVERRFGENAVILSSRVIRKNRFGFLPIFRKKILEVTVGIREEEDFRKEFERERELIKEIENLKKIVNELINNGEVKGEKIVEKGSDTYAPRVKRYLEKLVIKNISKNIAEKIIQDACGYDIDNKIYDFKDEPYTSLRESIEKNIKLNEEFIQNPPKVVALVGPTGVGKTTTLAKLAHLFKKNKKKVGIISLDCFRVGAFEQLKAFAEVLEVPFKLADSPRAFNIQLLEMDDRDVILVDTAGRSHYDVIRLKELETYFKVSDISVYLTLAANLSELVMYEAIMQFGMFSISGLIFTKLDETPYPGSMVNVAYRTQYPVVCFTMGQSIPEDIVVANYDYLVRLILEDEDEVRPATQLA.

GTP is bound by residues 179–186 (GPTGVGKT), 255–259 (DTAGR), and 312–315 (TKLD).

Belongs to the GTP-binding SRP family.

The protein resides in the cell membrane. Functionally, necessary for flagellar biosynthesis. May be involved in translocation of the flagellum. The polypeptide is Flagellar biosynthesis protein FlhF (flhF) (Aquifex aeolicus (strain VF5)).